The chain runs to 448 residues: Adenylyltransferase and sulfurtransferase UBA4 (448 aa).

ATP-binding positions include Gly-88, Asp-109, 116 to 120, Lys-133, and 177 to 178; these read SNLHR and DT. Zn(2+)-binding residues include Cys-219 and Cys-222. Residue Cys-236 is the Glycyl thioester intermediate; for adenylyltransferase activity of the active site. The Zn(2+) site is built by Cys-297 and Cys-300. The region spanning 349–446 is the Rhodanese domain; it reads QGENSILIDV…WSKEIDSKIP (98 aa). Residue Cys-405 is the Cysteine persulfide intermediate; for sulfurtransferase activity of the active site.

This sequence in the N-terminal section; belongs to the HesA/MoeB/ThiF family. UBA4 subfamily. Zn(2+) serves as cofactor.

It localises to the cytoplasm. Its subcellular location is the cytosol. It participates in tRNA modification; 5-methoxycarbonylmethyl-2-thiouridine-tRNA biosynthesis. Its function is as follows. Plays a central role in 2-thiolation of mcm(5)S(2)U at tRNA wobble positions of cytosolic tRNA(Lys), tRNA(Glu) and tRNA(Gln). Acts by mediating the C-terminal thiocarboxylation of sulfur carrier URM1. Its N-terminus first activates URM1 as acyl-adenylate (-COAMP), then the persulfide sulfur on the catalytic cysteine is transferred to URM1 to form thiocarboxylation (-COSH) of its C-terminus. The reaction probably involves hydrogen sulfide that is generated from the persulfide intermediate and that acts as a nucleophile towards URM1. Subsequently, a transient disulfide bond is formed. Does not use thiosulfate as sulfur donor; NFS1 probably acting as a sulfur donor for thiocarboxylation reactions. Prior mcm(5) tRNA modification by the elongator complex is required for 2-thiolation. May also be involved in protein urmylation. This Debaryomyces hansenii (strain ATCC 36239 / CBS 767 / BCRC 21394 / JCM 1990 / NBRC 0083 / IGC 2968) (Yeast) protein is Adenylyltransferase and sulfurtransferase UBA4.